A 786-amino-acid chain; its full sequence is Calcium-independent phospholipase A2-gamma (786 aa).

The N-linked (GlcNAc...) asparagine glycan is linked to N4. 3 disordered regions span residues 158–180, 225–285, and 321–348; these read KKYSDKSTEKSPVPEGRNHIIDK, KENS…SLPI, and SKSQAEEQEEPAKSEPAGSKDKTVEEKK. The segment covering 225–245 has biased composition (basic and acidic residues); it reads KENSHFQEKSELEGKKVEEGK. 2 stretches are compositionally biased toward polar residues: residues 246–258 and 266–285; these read SSSLDPGILTSQA and SAGTMDKATSPSGTPESLPI. Positions 449 to 644 constitute a PNPLA domain; that stretch reads LTIDGGGTRG…LLNNPSALAM (196 aa). The GXGXXG signature appears at 453–458; sequence GGGTRG. The chain crosses the membrane as a helical span at residues 483 to 503; that stretch reads ICGVSTGAILAFMLGLFHLPL. A GXSXG motif is present at residues 485–489; that stretch reads GVSTG. The active-site Nucleophile is S487. Residue D631 is the Proton acceptor of the active site. Residues 631-633 carry the DGA/G motif; the sequence is DGG. K740 is modified (N6-succinyllysine).

Expressed in kidney, heart and brain.

Its subcellular location is the endoplasmic reticulum membrane. It is found in the mitochondrion membrane. The protein localises to the peroxisome membrane. It catalyses the reaction a 1,2-diacyl-sn-glycero-3-phosphocholine + H2O = a 1-acyl-sn-glycero-3-phosphocholine + a fatty acid + H(+). The catalysed reaction is a 1,2-diacyl-sn-glycero-3-phosphocholine + H2O = a 2-acyl-sn-glycero-3-phosphocholine + a fatty acid + H(+). The enzyme catalyses a 1,2-diacyl-sn-glycero-3-phosphoethanolamine + H2O = a 1-acyl-sn-glycero-3-phosphoethanolamine + a fatty acid + H(+). It carries out the reaction a 1-O-(1Z-alkenyl)-2-acyl-sn-glycero-3-phosphocholine + H2O = a 1-O-(1Z-alkenyl)-sn-glycero-3-phosphocholine + a fatty acid + H(+). It catalyses the reaction a 1-acyl-sn-glycero-3-phosphocholine + H2O = sn-glycerol 3-phosphocholine + a fatty acid + H(+). The catalysed reaction is 1-acyl-2-(9Z,12Z)-octadecadienoyl-sn-glycero-3-phosphocholine + H2O = a 1-acyl-sn-glycero-3-phosphocholine + (9Z,12Z)-octadecadienoate + H(+). The enzyme catalyses 1-acyl-2-(5Z,8Z,11Z,14Z-eicosatetraenoyl)-sn-glycero-3-phosphocholine + H2O = a 1-acyl-sn-glycero-3-phosphocholine + (5Z,8Z,11Z,14Z)-eicosatetraenoate + H(+). It carries out the reaction 1-hexadecanoyl-2-(5Z,8Z,11Z,14Z-eicosatetraenoyl)-sn-glycero-3-phosphocholine + H2O = 1-hexadecanoyl-sn-glycero-3-phosphocholine + (5Z,8Z,11Z,14Z)-eicosatetraenoate + H(+). It catalyses the reaction 1-octadecanoyl-2-(9Z-octadecenoyl)-sn-glycero-3-phosphocholine + H2O = 1-octadecanoyl-sn-glycero-3-phosphocholine + (9Z)-octadecenoate + H(+). The catalysed reaction is 1-hexadecanoyl-2-(9Z-octadecenoyl)-sn-glycero-3-phosphocholine + H2O = 1-hexadecanoyl-sn-glycero-3-phosphocholine + (9Z)-octadecenoate + H(+). The enzyme catalyses 1-hexadecanoyl-2-(9Z,12Z-octadecadienoyl)-sn-glycero-3-phosphocholine + H2O = (9Z,12Z)-octadecadienoate + 1-hexadecanoyl-sn-glycero-3-phosphocholine + H(+). It carries out the reaction 1-acyl-2-(9Z,12Z)-octadecadienoyl-sn-glycero-3-phosphoethanolamine + H2O = a 1-acyl-sn-glycero-3-phosphoethanolamine + (9Z,12Z)-octadecadienoate + H(+). It catalyses the reaction 1-acyl-2-(5Z,8Z,11Z,14Z)-eicosatetraenoyl-sn-glycero-3-phosphoethanolamine + H2O = a 1-acyl-sn-glycero-3-phosphoethanolamine + (5Z,8Z,11Z,14Z)-eicosatetraenoate + H(+). The catalysed reaction is 1-hexadecanoyl-2-(5Z,8Z,11Z,14Z-eicosatetraenoyl)-sn-glycero-3-phosphoethanolamine + H2O = 1-hexadecanoyl-sn-glycero-3-phosphoethanolamine + (5Z,8Z,11Z,14Z)-eicosatetraenoate + H(+). The enzyme catalyses 1-hexadecanoyl-2-(5Z,8Z,11Z,14Z-eicosatetraenoyl)-sn-glycero-3-phosphocholine + H2O = 2-(5Z,8Z,11Z,14Z)-eicosatetraenoyl-sn-glycero-3-phosphocholine + hexadecanoate + H(+). It carries out the reaction 1-octadecanoyl-2-(9Z-octadecenoyl)-sn-glycero-3-phosphocholine + H2O = 2-(9Z-octadecenoyl)-sn-glycero-3-phosphocholine + octadecanoate + H(+). It catalyses the reaction 1-hexadecanoyl-2-(4Z,7Z,10Z,13Z,16Z,19Z-docosahexaenoyl)-sn-glycero-3-phosphocholine + H2O = 2-(4Z,7Z,10Z,13Z,16Z,19Z-docosahexaenoyl)-sn-glycero-3-phosphocholine + hexadecanoate + H(+). The catalysed reaction is 1-O-(1Z)-hexadecenyl-2 (5Z,8Z,11Z,14Z)-eicosatetraenoyl-sn-glycero-3-phosphocholine + H2O = 1-(1Z-hexadecenyl)-sn-glycero-3-phosphocholine + (5Z,8Z,11Z,14Z)-eicosatetraenoate + H(+). The enzyme catalyses 1-O-(1Z-hexadecenyl)-2-(9Z-octadecenoyl)-sn-glycero-3-phosphocholine + H2O = 1-(1Z-hexadecenyl)-sn-glycero-3-phosphocholine + (9Z)-octadecenoate + H(+). It carries out the reaction 1-hexadecanoyl-sn-glycero-3-phosphocholine + H2O = sn-glycerol 3-phosphocholine + hexadecanoate + H(+). It catalyses the reaction 1',3'-bis-[1,2-di-(9Z,12Z-octadecadienoyl)-sn-glycero-3-phospho]-glycerol + H2O = 1'-[1,2-di-(9Z,12Z-octadecadienoyl)-sn-glycero-3-phospho]-3'-[1-(9Z,12Z-octadecadienoyl)-sn-glycero-3-phospho]-glycerol + (9Z,12Z)-octadecadienoate + H(+). The catalysed reaction is 1'-[1-acyl-2-(9-hydroxy-(10E,12Z)-octadecadienoyl)-sn-glycero-3-phospho]-3'-[1,2-diacyl-sn-glycero-3-phospho]-glycerol + H2O = 9-hydroxy-(10E,12Z)-octadecadienoate + 1'-[1,2-diacyl-sn-glycero-3-phospho],3'-[1-acyl-sn-glycero-3-phospho]-glycerol + H(+). Its pathway is phospholipid metabolism. Its activity is regulated as follows. Calcium-independent phospholipase. In terms of biological role, calcium-independent and membrane-bound phospholipase, that catalyzes the esterolytic cleavage of fatty acids from glycerophospholipids to yield free fatty acids and lysophospholipids, hence regulating membrane physical properties and the release of lipid second messengers and growth factors. Hydrolyzes phosphatidylethanolamine, phosphatidylcholine and probably phosphatidylinositol with a possible preference for the former. Has also a broad substrate specificity in terms of fatty acid moieties, hydrolyzing saturated and mono-unsaturated fatty acids at nearly equal rates from either the sn-1 or sn-2 position in diacyl phosphatidylcholine. However, has a weak activity toward polyunsaturated fatty acids at the sn-2 position, and thereby favors the production of 2-arachidonoyl lysophosphatidylcholine, a key branch point metabolite in eicosanoid signaling. On the other hand, can produce arachidonic acid from the sn-1 position of diacyl phospholipid and from the sn-2 position of arachidonate-containing plasmalogen substrates. Therefore, plays an important role in the mobilization of arachidonic acid in response to cellular stimuli and the generation of lipid second messengers. Can also hydrolyze lysophosphatidylcholine. In the mitochondrial compartment, catalyzes the hydrolysis and release of oxidized aliphatic chains from cardiolipin and integrates mitochondrial bioenergetics and signaling. It is essential for maintaining efficient bioenergetic mitochondrial function through tailoring mitochondrial membrane lipid metabolism and composition. This chain is Calcium-independent phospholipase A2-gamma, found in Oryctolagus cuniculus (Rabbit).